The chain runs to 388 residues: Galactokinase (388 aa).

33-36 is a substrate binding site; that stretch reads EHTD. ATP-binding positions include S67 and 124–130; that span reads GAGLSSS. Positions 130 and 162 each coordinate Mg(2+). D174 functions as the Proton acceptor in the catalytic mechanism. Y224 contacts substrate.

Belongs to the GHMP kinase family. GalK subfamily.

The protein resides in the cytoplasm. The enzyme catalyses alpha-D-galactose + ATP = alpha-D-galactose 1-phosphate + ADP + H(+). Its pathway is carbohydrate metabolism; galactose metabolism. Catalyzes the transfer of the gamma-phosphate of ATP to D-galactose to form alpha-D-galactose-1-phosphate (Gal-1-P). In Lacticaseibacillus casei (strain BL23) (Lactobacillus casei), this protein is Galactokinase.